A 444-amino-acid polypeptide reads, in one-letter code: Type II NADH:quinone oxidoreductase (444 aa).

FAD contacts are provided by residues 8-12, N38, and S120; that span reads GGGAG. Residues 186–191 and G285 contribute to the NAD(+) site; that span reads VGGGAT. FAD contacts are provided by D325 and A341.

Belongs to the NADH dehydrogenase family. FAD serves as cofactor.

It is found in the cell inner membrane. It catalyses the reaction a quinone + NADH + H(+) = a quinol + NAD(+). The enzyme catalyses a ubiquinone + NADH + H(+) = a ubiquinol + NAD(+). Alternative, nonproton pumping NADH:quinone oxidoreductase that delivers electrons to the respiratory chain by oxidation of NADH and reduction of quinones. Utilizes NADH exclusively, and electron flow from NADH to ubiquinone does not generate an electrochemical gradient. The sequence is that of Type II NADH:quinone oxidoreductase (ndh) from Haemophilus influenzae (strain ATCC 51907 / DSM 11121 / KW20 / Rd).